Consider the following 226-residue polypeptide: Cytochrome c oxidase subunit 2 (226 aa).

Residues 1-25 are Mitochondrial intermembrane-facing; sequence MNTWLLSLQNSNSPTYDMMIFFHDF. Residues 26-47 form a helical membrane-spanning segment; that stretch reads TMMILIFITLLILFIMFTMINN. The Mitochondrial matrix portion of the chain corresponds to 48–61; that stretch reads NLINRFLLQGHFIE. A helical membrane pass occupies residues 62–81; it reads LIWTITPMIILILIAIPSFK. The Mitochondrial intermembrane segment spans residues 82–226; that stretch reads ILYLTDEMFN…YFKNWLKSFL (145 aa). 6 residues coordinate Cu cation: H160, C195, E197, C199, H203, and M206. E197 contributes to the Mg(2+) binding site.

Belongs to the cytochrome c oxidase subunit 2 family. In terms of assembly, component of the cytochrome c oxidase (complex IV, CIV), a multisubunit enzyme composed of a catalytic core of 3 subunits and several supernumerary subunits. The complex exists as a monomer or a dimer and forms supercomplexes (SCs) in the inner mitochondrial membrane with ubiquinol-cytochrome c oxidoreductase (cytochrome b-c1 complex, complex III, CIII). The cofactor is Cu cation.

It localises to the mitochondrion inner membrane. The enzyme catalyses 4 Fe(II)-[cytochrome c] + O2 + 8 H(+)(in) = 4 Fe(III)-[cytochrome c] + 2 H2O + 4 H(+)(out). Component of the cytochrome c oxidase, the last enzyme in the mitochondrial electron transport chain which drives oxidative phosphorylation. The respiratory chain contains 3 multisubunit complexes succinate dehydrogenase (complex II, CII), ubiquinol-cytochrome c oxidoreductase (cytochrome b-c1 complex, complex III, CIII) and cytochrome c oxidase (complex IV, CIV), that cooperate to transfer electrons derived from NADH and succinate to molecular oxygen, creating an electrochemical gradient over the inner membrane that drives transmembrane transport and the ATP synthase. Cytochrome c oxidase is the component of the respiratory chain that catalyzes the reduction of oxygen to water. Electrons originating from reduced cytochrome c in the intermembrane space (IMS) are transferred via the dinuclear copper A center (CU(A)) of subunit 2 and heme A of subunit 1 to the active site in subunit 1, a binuclear center (BNC) formed by heme A3 and copper B (CU(B)). The BNC reduces molecular oxygen to 2 water molecules using 4 electrons from cytochrome c in the IMS and 4 protons from the mitochondrial matrix. This Lasius sp protein is Cytochrome c oxidase subunit 2 (COII).